A 553-amino-acid polypeptide reads, in one-letter code: Serine/threonine-protein phosphatase 2B catalytic subunit A1 (553 aa).

Position 2 is an N-acetylserine (S2). Fe cation-binding residues include D119, H121, and D147. Zn(2+) is bound by residues D147 and N179. H180 acts as the Proton donor in catalysis. Zn(2+) contacts are provided by H228 and H317. Residues 413-447 (LDPESEPKAAEETVKARANATKETGTPSDEKASSA) are disordered. A compositionally biased stretch (basic and acidic residues) spans 417–427 (SEPKAAEETVK).

The protein belongs to the PPP phosphatase family. PP-2B subfamily. Composed of two components (A and B), the A component is the catalytic subunit and the B component confers calcium sensitivity. It depends on Fe(3+) as a cofactor. The cofactor is Zn(2+).

It catalyses the reaction O-phospho-L-seryl-[protein] + H2O = L-seryl-[protein] + phosphate. The catalysed reaction is O-phospho-L-threonyl-[protein] + H2O = L-threonyl-[protein] + phosphate. Functionally, calcium-dependent, calmodulin-stimulated protein phosphatase. This subunit may have a role in the calmodulin activation of calcineurin. This Saccharomyces cerevisiae (strain ATCC 204508 / S288c) (Baker's yeast) protein is Serine/threonine-protein phosphatase 2B catalytic subunit A1 (CNA1).